Here is a 354-residue protein sequence, read N- to C-terminus: Bergaptol O-methyltransferase (354 aa).

H121 contributes to the bergaptol binding site. Positions 174, 198, 221, and 255 each coordinate S-adenosyl-L-homocysteine. A bergaptol-binding site is contributed by H259. The active-site Proton acceptor is H259.

It belongs to the class I-like SAM-binding methyltransferase superfamily. Cation-independent O-methyltransferase family. COMT subfamily.

It carries out the reaction a 5-hydroxyfurocoumarin + S-adenosyl-L-methionine = a 5-methoxyfurocoumarin + S-adenosyl-L-homocysteine + H(+). It catalyses the reaction bergaptol + S-adenosyl-L-methionine = bergapten + S-adenosyl-L-homocysteine. With respect to regulation, inhibited by Cu(2+), Ni(2+) and Co(2+). The sequence is that of Bergaptol O-methyltransferase from Ammi majus (Bishop's weed).